A 138-amino-acid polypeptide reads, in one-letter code: Putative pre-16S rRNA nuclease (138 aa).

The protein belongs to the YqgF nuclease family.

The protein localises to the cytoplasm. Its function is as follows. Could be a nuclease involved in processing of the 5'-end of pre-16S rRNA. In Caldicellulosiruptor saccharolyticus (strain ATCC 43494 / DSM 8903 / Tp8T 6331), this protein is Putative pre-16S rRNA nuclease.